The sequence spans 266 residues: Type III pantothenate kinase (266 aa).

6-13 (DAGNTNIV) contributes to the ATP binding site. Substrate contacts are provided by residues Tyr100 and 107–110 (GADR). The active-site Proton acceptor is Asp109. Asp129 serves as a coordination point for K(+). ATP is bound at residue Thr132. Thr184 serves as a coordination point for substrate.

It belongs to the type III pantothenate kinase family. As to quaternary structure, homodimer. The cofactor is NH4(+). Requires K(+) as cofactor.

Its subcellular location is the cytoplasm. It catalyses the reaction (R)-pantothenate + ATP = (R)-4'-phosphopantothenate + ADP + H(+). It functions in the pathway cofactor biosynthesis; coenzyme A biosynthesis; CoA from (R)-pantothenate: step 1/5. In terms of biological role, catalyzes the phosphorylation of pantothenate (Pan), the first step in CoA biosynthesis. The sequence is that of Type III pantothenate kinase from Clostridium beijerinckii (strain ATCC 51743 / NCIMB 8052) (Clostridium acetobutylicum).